We begin with the raw amino-acid sequence, 552 residues long: Putative acetolactate synthase large subunit IlvB2 (552 aa).

Position 48 (E48) interacts with thiamine diphosphate. FAD is bound by residues 262 to 285 (FGDG…VGVS) and 309 to 328 (DPDP…ITTS). Residues 394–474 (TCISWTFRGI…VTWAVLNDGQ (81 aa)) are thiamine pyrophosphate binding. D445 is a Mg(2+) binding site.

Belongs to the TPP enzyme family. In terms of assembly, heterodimer of large catalytic subunit and small regulatory subunit. It depends on Mg(2+) as a cofactor. Requires thiamine diphosphate as cofactor.

The enzyme catalyses 2 pyruvate + H(+) = (2S)-2-acetolactate + CO2. It functions in the pathway amino-acid biosynthesis; L-isoleucine biosynthesis; L-isoleucine from 2-oxobutanoate: step 1/4. Its pathway is amino-acid biosynthesis; L-valine biosynthesis; L-valine from pyruvate: step 1/4. In terms of biological role, catalyzes the conversion of 2 pyruvate molecules into acetolactate in the first common step of the biosynthetic pathway of the branched-amino acids such as leucine, isoleucine, and valine. The sequence is that of Putative acetolactate synthase large subunit IlvB2 (ilvB2) from Mycobacterium tuberculosis (strain ATCC 25618 / H37Rv).